Consider the following 174-residue polypeptide: uncharacterized protein (174 aa).

This is an uncharacterized protein from Acidianus convivator (ABV).